A 434-amino-acid polypeptide reads, in one-letter code: Eukaryotic translation initiation factor 3 subunit E (434 aa).

Positions 219–392 constitute a PCI domain; sequence FFNHPKGRDL…GHVVMGTQPL (174 aa).

This sequence belongs to the eIF-3 subunit E family. In terms of assembly, component of the eukaryotic translation initiation factor 3 (eIF-3) complex. The eIF-3 complex interacts with pix. Interacts with mxt.

It is found in the cytoplasm. In terms of biological role, component of the eukaryotic translation initiation factor 3 (eIF-3) complex, which is involved in protein synthesis of a specialized repertoire of mRNAs and, together with other initiation factors, stimulates binding of mRNA and methionyl-tRNAi to the 40S ribosome. The eIF-3 complex specifically targets and initiates translation of a subset of mRNAs involved in cell proliferation. This is Eukaryotic translation initiation factor 3 subunit E (eIF3-S6) from Drosophila virilis (Fruit fly).